The sequence spans 142 residues: Large ribosomal subunit protein uL11 (142 aa).

Belongs to the universal ribosomal protein uL11 family. In terms of assembly, part of the ribosomal stalk of the 50S ribosomal subunit. Interacts with L10 and the large rRNA to form the base of the stalk. L10 forms an elongated spine to which L12 dimers bind in a sequential fashion forming a multimeric L10(L12)X complex. One or more lysine residues are methylated.

Functionally, forms part of the ribosomal stalk which helps the ribosome interact with GTP-bound translation factors. This is Large ribosomal subunit protein uL11 from Edwardsiella ictaluri (strain 93-146).